Reading from the N-terminus, the 146-residue chain is UPF0178 protein BC_3040 (146 aa).

It belongs to the UPF0178 family.

This Bacillus cereus (strain ATCC 14579 / DSM 31 / CCUG 7414 / JCM 2152 / NBRC 15305 / NCIMB 9373 / NCTC 2599 / NRRL B-3711) protein is UPF0178 protein BC_3040.